A 183-amino-acid polypeptide reads, in one-letter code: Endoribonuclease AbiQ (183 aa).

The protein belongs to the ToxN/AbiQ toxin family. In terms of assembly, forms a triangular heterohexamer with a single 35-nt-long repeat of RNA antitoxin AntiQ.

Its subcellular location is the cytoplasm. In terms of biological role, toxic component of a type III toxin-antitoxin (TA) system. An endoribonuclease that is probably sequence-specific. It is neutralized by its cognate antitoxin RNA AntiQ, which has 2.8 35 nucleotide-long repeats. Cannot be cloned in L.lactis subsp. cremoris strain NZ9000 in the absence of the antitoxin gene; expression in strain NZ9000 even in the presence of antiQ inhibits growth in a bacteriostatic fashion. Confers resistance to 936 and c2 phages but not P335 phages in L.lactis, causes an abortive infection (Abi phenotype). Viral DNA is replicated but not cleaved from its concatemeric form, while the viral major structural protein is produced normally in the presence of this protein. Operon expression in E.coli confers resistance to 3 phages of the Myoviridae family (T4, RB69 and phage 2) and 1 of the Siphoviridae family (T5), but not other tested phages (T1, T3, lambda vir, HK97, Mu and pilH alpha). The presence of this operon in L.lactis subsp. lactis strain IL1403 during phage P008 infection alters the viral transcription profiles. This chain is Endoribonuclease AbiQ, found in Lactococcus lactis subsp. lactis (Streptococcus lactis).